The following is a 281-amino-acid chain: CCAAT/enhancer-binding protein epsilon (281 aa).

Residues 1-30 are disordered; it reads MSHGTYYECEPRGGQQPLEFSGGRAGPGEL. Residue lysine 121 forms a Glycyl lysine isopeptide (Lys-Gly) (interchain with G-Cter in SUMO2) linkage. Serine 181 carries the phosphoserine modification. Residues 204–267 enclose the bZIP domain; the sequence is SLEYRLRRER…DTLRNLFRQI (64 aa). Positions 208–245 are basic motif; sequence RLRRERNNIAVRKSRDKAKRRIMETQQKVLEYMAENER. The tract at residues 246–267 is leucine-zipper; it reads LRSRVDQLTQELDTLRNLFRQI.

The protein belongs to the bZIP family. C/EBP subfamily. In terms of assembly, binds DNA as a homodimer and as a heterodimer. Can form stable heterodimers with CEBPA, CEBPB and CEBPD. Interacts with GATA1 and SPI1. Interacts with SMARCD2.

It is found in the nucleus. In terms of biological role, transcriptional activator. C/EBP are DNA-binding proteins that recognize two different motifs: the CCAAT homology common to many promoters and the enhanced core homology common to many enhancers. Required for the promyelocyte-myelocyte transition in myeloid differentiation. This is CCAAT/enhancer-binding protein epsilon (Cebpe) from Rattus norvegicus (Rat).